The chain runs to 360 residues: UDP-N-acetylglucosamine--N-acetylmuramyl-(pentapeptide) pyrophosphoryl-undecaprenol N-acetylglucosamine transferase (360 aa).

Positions 198 and 289 each coordinate UDP-N-acetyl-alpha-D-glucosamine.

It belongs to the glycosyltransferase 28 family. MurG subfamily.

Its subcellular location is the cell membrane. It carries out the reaction Mur2Ac(oyl-L-Ala-gamma-D-Glu-L-Lys-D-Ala-D-Ala)-di-trans,octa-cis-undecaprenyl diphosphate + UDP-N-acetyl-alpha-D-glucosamine = beta-D-GlcNAc-(1-&gt;4)-Mur2Ac(oyl-L-Ala-gamma-D-Glu-L-Lys-D-Ala-D-Ala)-di-trans,octa-cis-undecaprenyl diphosphate + UDP + H(+). It participates in cell wall biogenesis; peptidoglycan biosynthesis. Its function is as follows. Cell wall formation. Catalyzes the transfer of a GlcNAc subunit on undecaprenyl-pyrophosphoryl-MurNAc-pentapeptide (lipid intermediate I) to form undecaprenyl-pyrophosphoryl-MurNAc-(pentapeptide)GlcNAc (lipid intermediate II). This is UDP-N-acetylglucosamine--N-acetylmuramyl-(pentapeptide) pyrophosphoryl-undecaprenol N-acetylglucosamine transferase from Streptococcus pyogenes serotype M49 (strain NZ131).